The sequence spans 351 residues: Purine permease 3 (351 aa).

The next 10 helical transmembrane spans lie at 4-24 (ALVI…PLIM), 35-55 (IWFS…PLLF), 72-92 (FFLI…LSGF), 108-128 (TAAL…FFMV), 132-152 (FTPF…VLGM), 168-188 (ITGF…LPLV), 207-227 (FQLI…FIAG), 249-269 (VAVF…GLIF), 274-294 (LVSG…AVIF), and 304-324 (GLSL…EIKS). Positions 45-152 (GFPVIFIPLL…LTVGAAVLGM (108 aa)) constitute an EamA domain. A disordered region spans residues 329–351 (RRIQQEESQETEQSSLSRPISEC).

It belongs to the purine permeases (TC 2.A.7.14) family. Restricted to pollen.

The protein resides in the membrane. In terms of biological role, may be involved in transport of purine derivatives during pollen germination and tube elongation. This chain is Purine permease 3 (PUP3), found in Arabidopsis thaliana (Mouse-ear cress).